A 507-amino-acid polypeptide reads, in one-letter code: Tyrosine protein-kinase src-2 (507 aa).

The span at 1–10 (MGSCIGKEDP) shows a compositional bias: basic and acidic residues. The disordered stretch occupies residues 1-52 (MGSCIGKEDPPPGATSPVHTSSTLGRESLPSHPRIPSIGPIAASSSGNTIDK). Gly-2 carries N-myristoyl glycine lipidation. Positions 35–47 (IPSIGPIAASSSG) are enriched in low complexity. The 62-residue stretch at 57 to 118 (SQSANFVALF…PSNYVAREKS (62 aa)) folds into the SH3 domain. The region spanning 124 to 216 (WYFGKMRRID…GLCVNLGAPC (93 aa)) is the SH2 domain. A Protein kinase domain is found at 240 to 494 (VRLIRQIGAG…LQWKLEDLFN (255 aa)). Residues 246–254 (IGAGQFGEV) and Lys-268 contribute to the ATP site. Residue Asp-358 is the Proton acceptor of the active site. The residue at position 500 (Tyr-500) is a Phosphotyrosine.

It belongs to the protein kinase superfamily. Tyr protein kinase family. SRC subfamily. Mg(2+) serves as cofactor. The cofactor is Mn(2+). Post-translationally, may be phosphorylated on Tyr-500 by csk-1. As to expression, expressed in vulva, cells around anus and pharyngeal muscles.

The enzyme catalyses L-tyrosyl-[protein] + ATP = O-phospho-L-tyrosyl-[protein] + ADP + H(+). With respect to regulation, may be inhibited by csk-1-mediated phosphorylation at Tyr-500. Its function is as follows. Non-receptor tyrosine-protein kinase which may play a role in larval and pharynx development. Unlike src-1, does not play a role in embryonic development. This is Tyrosine protein-kinase src-2 from Caenorhabditis elegans.